Consider the following 199-residue polypeptide: Urease accessory protein UreG (199 aa).

GTP is bound at residue 8 to 15 (GPVGSGKT).

It belongs to the SIMIBI class G3E GTPase family. UreG subfamily. Homodimer. UreH, UreF and UreG form a complex that acts as a GTP-hydrolysis-dependent molecular chaperone, activating the urease apoprotein by helping to assemble the nickel containing metallocenter of UreC. The UreE protein probably delivers the nickel.

The protein resides in the cytoplasm. Its function is as follows. Facilitates the functional incorporation of the urease nickel metallocenter. This process requires GTP hydrolysis, probably effectuated by UreG. The protein is Urease accessory protein UreG of Helicobacter pylori (strain J99 / ATCC 700824) (Campylobacter pylori J99).